The sequence spans 159 residues: Phosphopantetheine adenylyltransferase (159 aa).

Residue Thr10 participates in substrate binding. ATP-binding positions include Thr10–Phe11 and His18. Positions 42, 74, and 88 each coordinate substrate. ATP is bound by residues Gly89 to Arg91, Glu99, and Trp124 to Thr130.

It belongs to the bacterial CoaD family. Homohexamer. The cofactor is Mg(2+).

The protein resides in the cytoplasm. It catalyses the reaction (R)-4'-phosphopantetheine + ATP + H(+) = 3'-dephospho-CoA + diphosphate. The protein operates within cofactor biosynthesis; coenzyme A biosynthesis; CoA from (R)-pantothenate: step 4/5. Functionally, reversibly transfers an adenylyl group from ATP to 4'-phosphopantetheine, yielding dephospho-CoA (dPCoA) and pyrophosphate. The polypeptide is Phosphopantetheine adenylyltransferase (Mannheimia succiniciproducens (strain KCTC 0769BP / MBEL55E)).